We begin with the raw amino-acid sequence, 127 residues long: Aspartate 1-decarboxylase (127 aa).

S25 acts as the Schiff-base intermediate with substrate; via pyruvic acid in catalysis. A Pyruvic acid (Ser) modification is found at S25. T57 provides a ligand contact to substrate. Y58 serves as the catalytic Proton donor. 73 to 75 (GAA) serves as a coordination point for substrate.

The protein belongs to the PanD family. As to quaternary structure, heterooctamer of four alpha and four beta subunits. The cofactor is pyruvate. Post-translationally, is synthesized initially as an inactive proenzyme, which is activated by self-cleavage at a specific serine bond to produce a beta-subunit with a hydroxyl group at its C-terminus and an alpha-subunit with a pyruvoyl group at its N-terminus.

It localises to the cytoplasm. It carries out the reaction L-aspartate + H(+) = beta-alanine + CO2. The protein operates within cofactor biosynthesis; (R)-pantothenate biosynthesis; beta-alanine from L-aspartate: step 1/1. Its function is as follows. Catalyzes the pyruvoyl-dependent decarboxylation of aspartate to produce beta-alanine. The polypeptide is Aspartate 1-decarboxylase (Staphylococcus aureus (strain MSSA476)).